The primary structure comprises 438 residues: MLRTHYSSEITEELNGKKVKVAGWVQEVKDLGGIKFIWIRDREGIVQVTAPKKKVPQEIFKLIPKLNSEDVIVVEGIVNFTPKAKLGFEIIPEKLEVISKAKTPLPLDPTGKVKAELDTRLDNRFMDLRNPRVMSIFKIRSSVFRATREFFYKEGFIEIHTPKIIATATEGGTELFPLKYFENDAFLAQSPQLYKQMMMSTGLDKVFEIGPIFRAEEHNTTRHLNEAWSIDAEMAFIESEEEVMDLLERLILYVINYVRENNEKELKILEFELNEPKKPFPRITYDEALEILSDLGKEIPWGEDIDTEGEKLLGKYMLENEGAELYFIYRYPSEAKPFYIMKYEDKPEVCKAFDLEYRGVEISSGGQREHRHDILVEQIREKGLNPESFEFYLRAFEYGMPPHGGFGLGAERLIMRMLDIGNIREVILFPRDRRRLVP.

Glu170 contacts L-aspartate. Residues 192–195 are aspartate; the sequence is QLYK. Residue Arg214 participates in L-aspartate binding. ATP contacts are provided by residues 214–216, 222–224, and Glu361; these read RAE and RHL. The Mg(2+) site is built by Glu361 and Ser364. L-aspartate is bound by residues Ser364 and Arg368. 409–412 contacts ATP; sequence GAER.

The protein belongs to the class-II aminoacyl-tRNA synthetase family. Type 2 subfamily. As to quaternary structure, homodimer. It depends on Mg(2+) as a cofactor.

Its subcellular location is the cytoplasm. It catalyses the reaction tRNA(Asp) + L-aspartate + ATP = L-aspartyl-tRNA(Asp) + AMP + diphosphate. In terms of biological role, catalyzes the attachment of L-aspartate to tRNA(Asp) in a two-step reaction: L-aspartate is first activated by ATP to form Asp-AMP and then transferred to the acceptor end of tRNA(Asp). The protein is Aspartate--tRNA(Asp) ligase of Pyrococcus abyssi (strain GE5 / Orsay).